The following is a 136-amino-acid chain: Protein PsiE (136 aa).

4 helical membrane passes run 15–35, 55–75, 83–103, and 108–128; these read ILQN…VVFL, YELV…ALIV, HFPL…LIIV, and PMDV…LWLC.

It belongs to the PsiE family.

It localises to the cell inner membrane. The chain is Protein PsiE from Salmonella agona (strain SL483).